A 315-amino-acid chain; its full sequence is Ribosomal RNA small subunit methyltransferase H (315 aa).

Residues 37–39 (GGH), aspartate 57, phenylalanine 83, aspartate 105, and glutamine 112 each bind S-adenosyl-L-methionine.

Belongs to the methyltransferase superfamily. RsmH family.

It localises to the cytoplasm. It catalyses the reaction cytidine(1402) in 16S rRNA + S-adenosyl-L-methionine = N(4)-methylcytidine(1402) in 16S rRNA + S-adenosyl-L-homocysteine + H(+). Its function is as follows. Specifically methylates the N4 position of cytidine in position 1402 (C1402) of 16S rRNA. In Pseudomonas fluorescens (strain SBW25), this protein is Ribosomal RNA small subunit methyltransferase H.